The primary structure comprises 1273 residues: Kinesin-like protein KIN-7O (1273 aa).

One can recognise a Kinesin motor domain in the interval 3–327 (RIHVSVRARP…LQFASRALRV (325 aa)). 79–86 (GQTNSGKT) lines the ATP pocket. A coiled-coil region spans residues 333-408 (VNEILTDAAL…QRERVLQEQA (76 aa)). The segment at 452-474 (SEDQSNVLSRGSSLESARSERET) is disordered. Over residues 453–467 (EDQSNVLSRGSSLES) the composition is skewed to polar residues. Coiled coils occupy residues 602-674 (EAIL…ESEV) and 751-1023 (VQSS…MEEE).

Belongs to the TRAFAC class myosin-kinesin ATPase superfamily. Kinesin family. KIN-7 subfamily.

This Arabidopsis thaliana (Mouse-ear cress) protein is Kinesin-like protein KIN-7O.